We begin with the raw amino-acid sequence, 200 residues long: Urease accessory protein UreG (200 aa).

A GTP-binding site is contributed by Gly-11–Thr-18.

This sequence belongs to the SIMIBI class G3E GTPase family. UreG subfamily. As to quaternary structure, homodimer. UreD, UreF and UreG form a complex that acts as a GTP-hydrolysis-dependent molecular chaperone, activating the urease apoprotein by helping to assemble the nickel containing metallocenter of UreC. The UreE protein probably delivers the nickel.

It localises to the cytoplasm. Functionally, facilitates the functional incorporation of the urease nickel metallocenter. This process requires GTP hydrolysis, probably effectuated by UreG. The chain is Urease accessory protein UreG from Thermosynechococcus vestitus (strain NIES-2133 / IAM M-273 / BP-1).